We begin with the raw amino-acid sequence, 423 residues long: Enolase (423 aa).

Gln165 is a binding site for (2R)-2-phosphoglycerate. Glu209 (proton donor) is an active-site residue. Positions 244, 285, and 310 each coordinate Mg(2+). 4 residues coordinate (2R)-2-phosphoglycerate: Lys335, Arg364, Ser365, and Lys386. The active-site Proton acceptor is Lys335.

Belongs to the enolase family. As to quaternary structure, homooctamer formed by a tetramer of dimers. It depends on Mg(2+) as a cofactor.

It localises to the cytoplasm. The protein resides in the secreted. The protein localises to the cell surface. It catalyses the reaction (2R)-2-phosphoglycerate = phosphoenolpyruvate + H2O. It participates in carbohydrate degradation; glycolysis; pyruvate from D-glyceraldehyde 3-phosphate: step 4/5. With respect to regulation, the covalent binding to the substrate causes inactivation of the enzyme, and possibly serves as a signal for the export of the protein. Functionally, catalyzes the reversible conversion of 2-phosphoglycerate (2-PG) into phosphoenolpyruvate (PEP). It is essential for the degradation of carbohydrates via glycolysis. The polypeptide is Enolase (Methanocaldococcus jannaschii (strain ATCC 43067 / DSM 2661 / JAL-1 / JCM 10045 / NBRC 100440) (Methanococcus jannaschii)).